The chain runs to 462 residues: Integrator complex subunit 12 (462 aa).

The disordered stretch occupies residues 42–129; the sequence is GIDSSYRPSQ…LEKPETQSSP (88 aa). The segment covering 59-86 has biased composition (polar residues); sequence ISSTKNISIKQEPKISSSLPSGNNNGKV. A Glycyl lysine isopeptide (Lys-Gly) (interchain with G-Cter in SUMO2) cross-link involves residue Lys68. Basic and acidic residues predominate over residues 88–124; it reads TTEKVKKEAEKRPADKMKSDITEGVDIPKKPRLEKPE. A Phosphoserine modification is found at Ser128. Residues 159-215 form a PHD-type zinc finger; it reads GLACVVCRQMMVASGNQLVECQECHNLYHRDCHKPQVTDKEANDPRLVWYCARCTRQ. Residue Lys254 forms a Glycyl lysine isopeptide (Lys-Gly) (interchain with G-Cter in SUMO2) linkage. The span at 301-328 shows a compositional bias: polar residues; the sequence is SSAGPSTAKLSSTTQNSTGKPATSSANQ. Positions 301–462 are disordered; that stretch reads SSAGPSTAKL…KKAAQKKLKK (162 aa). Composition is skewed to low complexity over residues 347-358 and 396-437; these read KIGSNNSTTPTV and GNSS…GPTS. The segment covering 449–462 has biased composition (basic residues); that stretch reads QMVKKKAAQKKLKK.

The protein belongs to the Integrator subunit 12 family. In terms of assembly, component of the Integrator complex, composed of core subunits INTS1, INTS2, INTS3, INTS4, INTS5, INTS6, INTS7, INTS8, INTS9/RC74, INTS10, INTS11/CPSF3L, INTS12, INTS13, INTS14 and INTS15. The core complex associates with protein phosphatase 2A subunits PPP2CA and PPP2R1A, to form the Integrator-PP2A (INTAC) complex. Post-translationally, dephosphorylated at Ser-128 by the PNUTS-PP1 complex, promoting RNA polymerase II transcription pause-release.

It localises to the nucleus. Functionally, component of the integrator complex, a multiprotein complex that terminates RNA polymerase II (Pol II) transcription in the promoter-proximal region of genes. The integrator complex provides a quality checkpoint during transcription elongation by driving premature transcription termination of transcripts that are unfavorably configured for transcriptional elongation: the complex terminates transcription by (1) catalyzing dephosphorylation of the C-terminal domain (CTD) of Pol II subunit POLR2A/RPB1 and SUPT5H/SPT5, (2) degrading the exiting nascent RNA transcript via endonuclease activity and (3) promoting the release of Pol II from bound DNA. The integrator complex is also involved in terminating the synthesis of non-coding Pol II transcripts, such as enhancer RNAs (eRNAs), small nuclear RNAs (snRNAs), telomerase RNAs and long non-coding RNAs (lncRNAs). Mediates recruitment of cytoplasmic dynein to the nuclear envelope, probably as component of the integrator complex. The polypeptide is Integrator complex subunit 12 (INTS12) (Macaca fascicularis (Crab-eating macaque)).